The primary structure comprises 170 residues: Class I hydrophobin E (170 aa).

The first 19 residues, 1-19 (MQLTTLLTGLISVLSVTTA), serve as a signal peptide directing secretion. Intrachain disulfides connect cysteine 62–cysteine 126, cysteine 70–cysteine 117, cysteine 71–cysteine 105, and cysteine 127–cysteine 139.

Belongs to the fungal hydrophobin family.

It localises to the secreted. Its subcellular location is the cell wall. Its function is as follows. Aerial growth, conidiation, and dispersal of filamentous fungi in the environment rely upon a capability of their secreting small amphipathic proteins called hydrophobins (HPBs) with low sequence identity. Class I can self-assemble into an outermost layer of rodlet bundles on aerial cell surfaces, conferring cellular hydrophobicity that supports fungal growth, development and dispersal; whereas Class II form highly ordered films at water-air interfaces through intermolecular interactions but contribute nothing to the rodlet structure. In P.expansum, hydrophobins contribute to germination, tolerance to cold stress and mycotoxins patulin and citrinin production. The chain is Class I hydrophobin E from Penicillium expansum (Blue mold rot fungus).